Consider the following 123-residue polypeptide: MKRGFTLLEVMLALAIFALSATAVLQIASGALSNQHVLEEKTVAGWVAENQTALLYLMTRGQRAVRQQGESDMAGSRWYWRTTPLSTGNALLQAVDIEVSLHEDFSSVIQSRRAWFSAVGGQQ.

The propeptide at 1–4 is leader sequence; it reads MKRG. Phenylalanine 5 is modified (N-methylphenylalanine). Residues 5–25 traverse the membrane as a helical segment; the sequence is FTLLEVMLALAIFALSATAVL.

The protein belongs to the GSP I family. Type II secretion is composed of four main components: the outer membrane complex, the inner membrane complex, the cytoplasmic secretion ATPase and the periplasm-spanning pseudopilus. Interacts with core component GspG. Interacts with pseudopilins GspJ and GspK. In terms of processing, cleaved by prepilin peptidase. Methylated by prepilin peptidase at the amino group of the N-terminal phenylalanine once the leader sequence is cleaved by prepilin peptidase.

The protein resides in the cell inner membrane. In terms of biological role, component of the type II secretion system required for the energy-dependent secretion of extracellular factors such as proteases and toxins from the periplasm. Part of the pseudopilus tip complex that is critical for the recognition and binding of secretion substrates. In Escherichia coli, this protein is Type II secretion system protein I (gspI).